We begin with the raw amino-acid sequence, 687 residues long: Ribonuclease E (687 aa).

The region spanning 35–117 is the S1 motif domain; the sequence is GDIYLGVVEN…LTGNITLPGR (83 aa). Mg(2+) is bound by residues Asp296 and Asp339. Residues Cys397 and Cys400 each coordinate Zn(2+). The interval 650 to 687 is disordered; the sequence is PIKLTETMEESEVNAASTANRRRRRRSSASDSDTGEDS. The short motif at 670–678 is the C4 Arg-rich motif, necessary and sufficient to confer PNPase binding on another protein element; the sequence is RRRRRRSSA.

Belongs to the RNase E/G family. As to quaternary structure, may form homodimers or higher order multimers. Interacts with polynucleotide phosphorylase (PNPase, pnp) via the C4 Arg-rich motif (residues 670-678). A homotetramer formed by a dimer of dimers. Mg(2+) is required as a cofactor. Requires Zn(2+) as cofactor.

The protein localises to the cytoplasm. The catalysed reaction is Endonucleolytic cleavage of single-stranded RNA in A- and U-rich regions.. Its function is as follows. Endoribonuclease that plays a central role in rRNA and tRNA processing and mRNA decay. Has been shown to act on 9S rRNA (the precursor of 5S rRNA). The protein is Ribonuclease E of Nostoc sp. (strain PCC 7120 / SAG 25.82 / UTEX 2576).